Reading from the N-terminus, the 217-residue chain is Cytidylate kinase (217 aa).

9-17 (GPSSSGKSS) is an ATP binding site.

Belongs to the cytidylate kinase family. Type 1 subfamily.

It is found in the cytoplasm. It catalyses the reaction CMP + ATP = CDP + ADP. It carries out the reaction dCMP + ATP = dCDP + ADP. The chain is Cytidylate kinase from Mycoplasma pneumoniae (strain ATCC 29342 / M129 / Subtype 1) (Mycoplasmoides pneumoniae).